Consider the following 415-residue polypeptide: Gamma-glutamyl phosphate reductase (415 aa).

Belongs to the gamma-glutamyl phosphate reductase family.

The protein localises to the cytoplasm. The catalysed reaction is L-glutamate 5-semialdehyde + phosphate + NADP(+) = L-glutamyl 5-phosphate + NADPH + H(+). Its pathway is amino-acid biosynthesis; L-proline biosynthesis; L-glutamate 5-semialdehyde from L-glutamate: step 2/2. Its function is as follows. Catalyzes the NADPH-dependent reduction of L-glutamate 5-phosphate into L-glutamate 5-semialdehyde and phosphate. The product spontaneously undergoes cyclization to form 1-pyrroline-5-carboxylate. This chain is Gamma-glutamyl phosphate reductase, found in Clostridium perfringens (strain 13 / Type A).